Reading from the N-terminus, the 137-residue chain is Small ribosomal subunit protein uS19 (137 aa).

Belongs to the universal ribosomal protein uS19 family.

Functionally, protein S19 forms a complex with S13 that binds strongly to the 16S ribosomal RNA. This chain is Small ribosomal subunit protein uS19, found in Methanospirillum hungatei JF-1 (strain ATCC 27890 / DSM 864 / NBRC 100397 / JF-1).